Reading from the N-terminus, the 203-residue chain is Proteasome subunit beta 1 (203 aa).

A propeptide spans 1 to 7 (MTEKLKG) (removed in mature form; by autocatalysis). Residue Thr8 is the Nucleophile of the active site.

The protein belongs to the peptidase T1B family. In terms of assembly, the 20S proteasome core is composed of 14 alpha and 14 beta subunits that assemble into four stacked heptameric rings, resulting in a barrel-shaped structure. The two inner rings, each composed of seven catalytic beta subunits, are sandwiched by two outer rings, each composed of seven alpha subunits. The catalytic chamber with the active sites is on the inside of the barrel. Has a gated structure, the ends of the cylinder being occluded by the N-termini of the alpha-subunits. Is capped at one or both ends by the proteasome regulatory ATPase, PAN.

The protein resides in the cytoplasm. It catalyses the reaction Cleavage of peptide bonds with very broad specificity.. The formation of the proteasomal ATPase PAN-20S proteasome complex, via the docking of the C-termini of PAN into the intersubunit pockets in the alpha-rings, triggers opening of the gate for substrate entry. Interconversion between the open-gate and close-gate conformations leads to a dynamic regulation of the 20S proteasome proteolysis activity. Functionally, component of the proteasome core, a large protease complex with broad specificity involved in protein degradation. In Thermococcus kodakarensis (strain ATCC BAA-918 / JCM 12380 / KOD1) (Pyrococcus kodakaraensis (strain KOD1)), this protein is Proteasome subunit beta 1.